Consider the following 275-residue polypeptide: tRNA (guanine-N(7)-)-methyltransferase (275 aa).

Positions M1–L73 are disordered. Residues A46–R59 show a composition bias toward basic residues. Residues E107, E132, D159, and D182 each coordinate S-adenosyl-L-methionine. D182 is an active-site residue. Residues K186, D218, and T254–E257 each bind substrate.

The protein belongs to the class I-like SAM-binding methyltransferase superfamily. TrmB family.

It carries out the reaction guanosine(46) in tRNA + S-adenosyl-L-methionine = N(7)-methylguanosine(46) in tRNA + S-adenosyl-L-homocysteine. Its pathway is tRNA modification; N(7)-methylguanine-tRNA biosynthesis. Functionally, catalyzes the formation of N(7)-methylguanine at position 46 (m7G46) in tRNA. The sequence is that of tRNA (guanine-N(7)-)-methyltransferase from Mycobacterium sp. (strain KMS).